The chain runs to 120 residues: NAD(P)H-quinone oxidoreductase subunit 3 (120 aa).

Transmembrane regions (helical) follow at residues 11-31, 64-84, and 89-109; these read LIFL…SYLI, MFAL…PWAV, and LGLL…VALV.

This sequence belongs to the complex I subunit 3 family. In terms of assembly, NDH-1 can be composed of about 15 different subunits; different subcomplexes with different compositions have been identified which probably have different functions.

Its subcellular location is the cell inner membrane. The catalysed reaction is a plastoquinone + NADH + (n+1) H(+)(in) = a plastoquinol + NAD(+) + n H(+)(out). It carries out the reaction a plastoquinone + NADPH + (n+1) H(+)(in) = a plastoquinol + NADP(+) + n H(+)(out). NDH-1 shuttles electrons from an unknown electron donor, via FMN and iron-sulfur (Fe-S) centers, to quinones in the respiratory and/or the photosynthetic chain. The immediate electron acceptor for the enzyme in this species is believed to be plastoquinone. Couples the redox reaction to proton translocation, and thus conserves the redox energy in a proton gradient. Cyanobacterial NDH-1 also plays a role in inorganic carbon-concentration. The polypeptide is NAD(P)H-quinone oxidoreductase subunit 3 (Gloeobacter violaceus (strain ATCC 29082 / PCC 7421)).